Consider the following 239-residue polypeptide: 1-(5-phosphoribosyl)-5-[(5-phosphoribosylamino)methylideneamino] imidazole-4-carboxamide isomerase (239 aa).

The active-site Proton acceptor is the Asp-8. The active-site Proton donor is the Asp-129.

It belongs to the HisA/HisF family.

The protein resides in the cytoplasm. The enzyme catalyses 1-(5-phospho-beta-D-ribosyl)-5-[(5-phospho-beta-D-ribosylamino)methylideneamino]imidazole-4-carboxamide = 5-[(5-phospho-1-deoxy-D-ribulos-1-ylimino)methylamino]-1-(5-phospho-beta-D-ribosyl)imidazole-4-carboxamide. It functions in the pathway amino-acid biosynthesis; L-histidine biosynthesis; L-histidine from 5-phospho-alpha-D-ribose 1-diphosphate: step 4/9. The polypeptide is 1-(5-phosphoribosyl)-5-[(5-phosphoribosylamino)methylideneamino] imidazole-4-carboxamide isomerase (Bacillus cereus (strain G9842)).